The sequence spans 304 residues: Probable 5-dehydro-4-deoxyglucarate dehydratase (304 aa).

Belongs to the DapA family.

The enzyme catalyses 5-dehydro-4-deoxy-D-glucarate + H(+) = 2,5-dioxopentanoate + CO2 + H2O. It functions in the pathway carbohydrate acid metabolism; D-glucarate degradation; 2,5-dioxopentanoate from D-glucarate: step 2/2. The polypeptide is Probable 5-dehydro-4-deoxyglucarate dehydratase (Rhodococcus jostii (strain RHA1)).